The primary structure comprises 147 residues: Large ribosomal subunit protein uL13 (147 aa).

Belongs to the universal ribosomal protein uL13 family. Part of the 50S ribosomal subunit.

In terms of biological role, this protein is one of the early assembly proteins of the 50S ribosomal subunit, although it is not seen to bind rRNA by itself. It is important during the early stages of 50S assembly. This chain is Large ribosomal subunit protein uL13, found in Frankia casuarinae (strain DSM 45818 / CECT 9043 / HFP020203 / CcI3).